Reading from the N-terminus, the 204-residue chain is GTP cyclohydrolase-2 (204 aa).

49 to 53 contacts GTP; that stretch reads RIHSE. 3 residues coordinate Zn(2+): Cys-54, Cys-65, and Cys-67. GTP contacts are provided by residues Gln-70, 92-94, and Thr-114; that span reads EGR. Asp-126 functions as the Proton acceptor in the catalytic mechanism. The Nucleophile role is filled by Arg-128. The GTP site is built by Thr-149 and Lys-154.

It belongs to the GTP cyclohydrolase II family. It depends on Zn(2+) as a cofactor.

It carries out the reaction GTP + 4 H2O = 2,5-diamino-6-hydroxy-4-(5-phosphoribosylamino)-pyrimidine + formate + 2 phosphate + 3 H(+). It participates in cofactor biosynthesis; riboflavin biosynthesis; 5-amino-6-(D-ribitylamino)uracil from GTP: step 1/4. In terms of biological role, catalyzes the conversion of GTP to 2,5-diamino-6-ribosylamino-4(3H)-pyrimidinone 5'-phosphate (DARP), formate and pyrophosphate. The protein is GTP cyclohydrolase-2 of Shewanella baltica (strain OS223).